The following is a 635-amino-acid chain: ATP-dependent zinc metalloprotease FtsH (635 aa).

Residues 1 to 6 are Cytoplasmic-facing; that stretch reads MNNQGR. The helical transmembrane segment at 7–27 threads the bilayer; sequence SILTWAALFVFVILLFNVFQS. The Periplasmic portion of the chain corresponds to 28 to 103; that stretch reads DGLLGGRNNI…VVPLETRMNT (76 aa). Residues 104–124 form a helical membrane-spanning segment; it reads FLGFLISWFPMLLLIGVWVFF. The Cytoplasmic segment spans residues 125–635; it reads MRQMHGGGKA…KKAKKESTNI (511 aa). 195–202 is an ATP binding site; it reads GPPGTGKT. His-417 lines the Zn(2+) pocket. Glu-418 is an active-site residue. Zn(2+)-binding residues include His-421 and Asp-495. The segment at 600–635 is disordered; sequence SEEENKFPFNDSPTIKIDKEKSPEKAKKAKKESTNI. Over residues 615 to 635 the composition is skewed to basic and acidic residues; it reads KIDKEKSPEKAKKAKKESTNI.

This sequence in the central section; belongs to the AAA ATPase family. It in the C-terminal section; belongs to the peptidase M41 family. Homohexamer. Zn(2+) is required as a cofactor.

The protein resides in the cell inner membrane. Functionally, acts as a processive, ATP-dependent zinc metallopeptidase for both cytoplasmic and membrane proteins. Plays a role in the quality control of integral membrane proteins. This is ATP-dependent zinc metalloprotease FtsH from Rickettsia felis (strain ATCC VR-1525 / URRWXCal2) (Rickettsia azadi).